Here is a 61-residue protein sequence, read N- to C-terminus: uncharacterized protein (61 aa).

The protein belongs to the DUP/COS family.

This is an uncharacterized protein from Saccharomyces cerevisiae (strain ATCC 204508 / S288c) (Baker's yeast).